The following is a 146-amino-acid chain: Interleukin-13 (146 aa).

The N-terminal stretch at 1-24 is a signal peptide; it reads MHPLLNPLLLALGLMALLLTTVIA. Asn52, Asn63, Asn71, and Asn86 each carry an N-linked (GlcNAc...) asparagine glycan. 2 disulfide bridges follow: Cys62-Cys90 and Cys78-Cys104.

The protein belongs to the IL-4/IL-13 family. Interacts with IL13RA2.

It localises to the secreted. In terms of biological role, cytokine that plays important roles in allergic inflammation and immune response to parasite infection. Synergizes with IL2 in regulating interferon-gamma synthesis. Stimulates B-cell proliferation, and activation of eosinophils, basophils, and mast cells. Plays an important role in controlling IL33 activity by modulating the production of transmembrane and soluble forms of interleukin-1 receptor-like 1/IL1RL1. Displays the capacity to antagonize Th1-driven proinflammatory immune response and downregulates synthesis of many proinflammatory cytokines including IL1, IL6, IL10, IL12 and TNF-alpha through a mechanism that partially involves suppression of NF-kappa-B. Also functions on nonhematopoietic cells, including endothelial cells where it induces vascular cell adhesion protein 1/VCAM1, which is important in the recruitment of eosinophils. Exerts its biological effects through its receptors which comprises the IL4R chain and the IL13RA1 chain, to activate JAK1 and TYK2, leading to the activation of STAT6. Aside from IL13RA1, another receptor IL13RA2 acts as a high affinity decoy for IL13 and mediates internalization and depletion of extracellular IL13. The protein is Interleukin-13 (IL13) of Homo sapiens (Human).